The sequence spans 328 residues: Phenylalanine--tRNA ligase alpha subunit (328 aa).

Residue E253 participates in Mg(2+) binding.

Belongs to the class-II aminoacyl-tRNA synthetase family. Phe-tRNA synthetase alpha subunit type 1 subfamily. In terms of assembly, tetramer of two alpha and two beta subunits. It depends on Mg(2+) as a cofactor.

It is found in the cytoplasm. It carries out the reaction tRNA(Phe) + L-phenylalanine + ATP = L-phenylalanyl-tRNA(Phe) + AMP + diphosphate + H(+). This is Phenylalanine--tRNA ligase alpha subunit from Actinobacillus pleuropneumoniae serotype 5b (strain L20).